Reading from the N-terminus, the 410-residue chain is Kelch domain-containing protein 10 (410 aa).

The segment at 1 to 40 (MSAAQGWDRNRRRGGGAAGGASGVSGAGAAGGGRGTGQLN) is disordered. Arg-13 carries the omega-N-methylarginine modification. A compositionally biased stretch (gly residues) spans 15–36 (GGAAGGASGVSGAGAAGGGRGT). 6 Kelch repeats span residues 87–154 (GPDN…DVHV), 155–198 (CNVK…GYIY), 199–260 (STDL…IHAY), 261–319 (NLET…LQTF), 320–364 (QWVK…GSLF), and 365–403 (KIWL…GLTQ). An interaction with CUL2 region spans residues 369–410 (VVPSLLELAWEKLLAAFPNLANLSRTQLLHLGLTQELIERLK).

It belongs to the KLHDC10 family. Component of a CRL2 E3 ubiquitin-protein ligase complex, also named ECS (Elongin BC-CUL2/5-SOCS-box protein) complex, composed of CUL2, Elongin BC (ELOB and ELOC), RBX1 and substrate-specific adapter KLHDC10. Interacts (via the 6 Kelch repeats) with PPP5C.

The protein localises to the nucleus. The protein resides in the cytoplasm. It participates in protein modification; protein ubiquitination. In terms of biological role, substrate-recognition component of a Cul2-RING (CRL2) E3 ubiquitin-protein ligase complex of the DesCEND (destruction via C-end degrons) pathway, which recognizes a C-degron located at the extreme C-terminus of target proteins, leading to their ubiquitination and degradation. The C-degron recognized by the DesCEND pathway is usually a motif of less than ten residues and can be present in full-length proteins, truncated proteins or proteolytically cleaved forms. The CRL2(KLHDC10) complex specifically recognizes proteins with a proline-glycine (Pro-Gly) or an alanine tail (CAT tail) at the C-terminus, leading to their ubiquitination and degradation. The CRL2(KLHDC10) complex is involved in the ribosome-associated quality control (RQC) pathway, which mediates the extraction of incompletely synthesized nascent chains from stalled ribosomes: CRL2(KLHDC10) acts downstream of NEMF and recognizes CAT tails associated with stalled nascent chains, leading to their ubiquitination and degradation. Participates in the oxidative stress-induced cell death through MAP3K5 activation. Inhibits PPP5C phosphatase activity on MAP3K5. Acts as a regulator of necroptosis. The protein is Kelch domain-containing protein 10 of Rattus norvegicus (Rat).